The following is a 37-amino-acid chain: Photosystem I reaction center subunit VIII (37 aa).

The helical transmembrane segment at 10-30 (IFVPLVGLVFPAIAMASLSLY) threads the bilayer.

This sequence belongs to the PsaI family.

The protein resides in the plastid. It is found in the chloroplast thylakoid membrane. Its function is as follows. May help in the organization of the PsaL subunit. The chain is Photosystem I reaction center subunit VIII from Gossypium barbadense (Sea Island cotton).